A 698-amino-acid chain; its full sequence is Serine/threonine-protein kinase Nek8 (698 aa).

In terms of domain architecture, Protein kinase spans 4–258 (YERIRVVGRG…LSHIMAQPLC (255 aa)). Residues 10-18 (VGRGAFGIV) and Lys-33 contribute to the ATP site. Asp-128 serves as the catalytic Proton acceptor. Thr-162 carries the phosphothreonine; by autocatalysis modification. Residues 281–307 (LTPGTPMAPGSTGSRATSARCRGVPRG) are disordered. 5 RCC1 repeats span residues 415 to 466 (RGII…ALSA), 467 to 518 (DGEL…ILTS), 520 to 571 (GRVL…TLLC), 585 to 636 (SGAC…AIGA), and 638 to 689 (GEVY…LAVR).

It belongs to the protein kinase superfamily. NEK Ser/Thr protein kinase family. NIMA subfamily. As to quaternary structure, interacts with PKD2; may regulate PKD2 targeting to the cilium. Interacts with ANKS6. Component of a complex containing at least ANKS6, INVS, NEK8 and NPHP3. ANKS6 may organize complex assembly by linking INVS and NPHP3 to NEK8 and INVS may target it to the proximal ciliary axoneme. Interacts with ANKS3. Requires Mg(2+) as cofactor.

The protein localises to the cytoplasm. The protein resides in the cytoskeleton. Its subcellular location is the cell projection. It is found in the cilium. It localises to the cilium axoneme. The protein localises to the microtubule organizing center. The protein resides in the centrosome. The enzyme catalyses L-seryl-[protein] + ATP = O-phospho-L-seryl-[protein] + ADP + H(+). The catalysed reaction is L-threonyl-[protein] + ATP = O-phospho-L-threonyl-[protein] + ADP + H(+). Functionally, required for renal tubular integrity. May regulate local cytoskeletal structure in kidney tubule epithelial cells. May regulate ciliary biogenesis through targeting of proteins to the cilia. Plays a role in organogenesis and is involved in the regulation of the Hippo signaling pathway. The chain is Serine/threonine-protein kinase Nek8 (Nek8) from Rattus norvegicus (Rat).